The chain runs to 355 residues: MKRDFRALLNPALERIEAYKVEGGQDAEVKLNQNESPFDLPMWLKDKILDEFRREPWNRYPDILPYRGMATYASFLGVPAESVIMSNGSNEMLYTIFMACVGAGRKVLIPEPSFSLYDKLAVLLQGEIVSVPLNPDLSFDVDAIIAAAEREKVDFIVLSTPNNPAGKSMSHDEVERIVSTCDAIVLADEAYIEFSQQESVVDLIDRYPNLIVLRTMSKALALAGMRIGFAITNPELMAEITKPKIPFASGRLAEITLANVLENYSLVTDAVHYILAERQRMEQELAGIAGVEVFESDTNFLIIRVGNAKEVFTKLREGGVLVRNVSGYPLMQNCLRCNIGLIEENDRLLELLKSC.

An N6-(pyridoxal phosphate)lysine modification is found at K218.

It belongs to the class-II pyridoxal-phosphate-dependent aminotransferase family. Histidinol-phosphate aminotransferase subfamily. In terms of assembly, homodimer. Requires pyridoxal 5'-phosphate as cofactor.

It carries out the reaction L-histidinol phosphate + 2-oxoglutarate = 3-(imidazol-4-yl)-2-oxopropyl phosphate + L-glutamate. Its pathway is amino-acid biosynthesis; L-histidine biosynthesis; L-histidine from 5-phospho-alpha-D-ribose 1-diphosphate: step 7/9. The sequence is that of Histidinol-phosphate aminotransferase from Chlorobaculum parvum (strain DSM 263 / NCIMB 8327) (Chlorobium vibrioforme subsp. thiosulfatophilum).